Here is a 370-residue protein sequence, read N- to C-terminus: Histidinol-phosphate aminotransferase (370 aa).

The residue at position 220 (Lys220) is an N6-(pyridoxal phosphate)lysine.

This sequence belongs to the class-II pyridoxal-phosphate-dependent aminotransferase family. Histidinol-phosphate aminotransferase subfamily. Homodimer. Pyridoxal 5'-phosphate is required as a cofactor.

The enzyme catalyses L-histidinol phosphate + 2-oxoglutarate = 3-(imidazol-4-yl)-2-oxopropyl phosphate + L-glutamate. It functions in the pathway amino-acid biosynthesis; L-histidine biosynthesis; L-histidine from 5-phospho-alpha-D-ribose 1-diphosphate: step 7/9. This chain is Histidinol-phosphate aminotransferase, found in Granulibacter bethesdensis (strain ATCC BAA-1260 / CGDNIH1).